The primary structure comprises 814 residues: Echinoderm microtubule-associated protein-like 1 (814 aa).

The stretch at 31–72 (SMEISDRIASLEQRVQMQEDDIQLLKSALADVVRRLNITEEQ) forms a coiled coil. The interval 77–185 (NRKGPTKARP…EPTFSPEEGY (109 aa)) is disordered. Positions 92-101 (PLRTTVNNGT) are enriched in polar residues. A compositionally biased stretch (low complexity) spans 103–115 (LPKKPSASLPSPS). Ser113 bears the Phosphoserine mark. Residues 127-137 (KSINRTSSSER) are compositionally biased toward polar residues. Over residues 142 to 152 (GRRESSGDSKG) the composition is skewed to basic and acidic residues. Residues 155–167 (NRTGSTSSSSSGK) are compositionally biased toward low complexity. Residues 175–814 (KEPTFSPEEG…DTSIMQWRVI (640 aa)) form a tandem atypical propeller in EMLs region. WD repeat units lie at residues 260 to 309 (EQLQ…IWDS), 314 to 357 (TLHV…VWDW), 362 to 399 (RLAD…FWTL), 408 to 445 (QGLF…VWGK), 449 to 488 (RISY…SWNG), 492 to 529 (KLHK…LQGT), 534 to 571 (FTPI…LWDA), 577 to 612 (VWDK…VFDT), 616 to 654 (DLVT…IYGV), 663 to 700 (RVGK…YWVP), 708 to 767 (SVET…LFSY), and 774 to 813 (APSH…QWRV).

The protein belongs to the WD repeat EMAP family. Homotrimer; self-association is mediated by the N-terminal coiled coil. Does not interact with EML3. Binds repolymerizing microtubules. Binds unpolymerized tubulins via its WD repeat region. Interacts with TASOR.

The protein localises to the cytoplasm. It localises to the perinuclear region. Its subcellular location is the cytoskeleton. Functionally, modulates the assembly and organization of the microtubule cytoskeleton, and probably plays a role in regulating the orientation of the mitotic spindle and the orientation of the plane of cell division. Required for normal proliferation of neuronal progenitor cells in the developing brain and for normal brain development. Does not affect neuron migration per se. This chain is Echinoderm microtubule-associated protein-like 1 (Eml1), found in Rattus norvegicus (Rat).